We begin with the raw amino-acid sequence, 701 residues long: Polyribonucleotide nucleotidyltransferase (701 aa).

Mg(2+) contacts are provided by Asp483 and Asp489. The region spanning 550-609 (PRIYTLHIPTDKIRDVIGPGGKVIRGIIEQTGVKIDVEDDGTIHVASADEASANKAIQII) is the KH domain. Residues 619 to 686 (GKTYLGKVVR…EGNKIKLSRK (68 aa)) form the S1 motif domain.

Belongs to the polyribonucleotide nucleotidyltransferase family. Mg(2+) serves as cofactor.

The protein localises to the cytoplasm. It catalyses the reaction RNA(n+1) + phosphate = RNA(n) + a ribonucleoside 5'-diphosphate. Its function is as follows. Involved in mRNA degradation. Catalyzes the phosphorolysis of single-stranded polyribonucleotides processively in the 3'- to 5'-direction. This chain is Polyribonucleotide nucleotidyltransferase, found in Solibacter usitatus (strain Ellin6076).